A 394-amino-acid chain; its full sequence is Purine ribonucleoside efflux pump NepI (394 aa).

The Cytoplasmic portion of the chain corresponds to 1–21 (MSEFIAENRGADAITRPNWSA). The helical transmembrane segment at 22–42 (VFSVAFCVACLIIVEFLPVSL) threads the bilayer. Topologically, residues 43-54 (LTPMAQDLGISE) are periplasmic. A helical membrane pass occupies residues 55-75 (GVAGQSVTVTAFVAMFASLFI). Over 76–85 (TQTIQATDRR) the chain is Cytoplasmic. A helical membrane pass occupies residues 86-106 (YVVILFAVLLTISCLLVSFAN). S107 is a topological domain (periplasmic). A helical membrane pass occupies residues 108–128 (FSLLLIGRACLGLALGGFWAM). At 129–147 (SASLTMRLVPPRTVPKALS) the chain is on the cytoplasmic side. The chain crosses the membrane as a helical span at residues 148-168 (VIFGAVSIALVIAAPLGSFLG). The Periplasmic segment spans residues 169–175 (ELIGWRN). The helical transmembrane segment at 176–196 (VFNAAAVMGVLCIFWIIKSLP) threads the bilayer. The Cytoplasmic segment spans residues 197–215 (SLPGKPSHQKQNTFRLLQR). Residues 216 to 236 (PGVMAGMIAIFMSFAGQFAFF) traverse the membrane as a helical segment. The Periplasmic segment spans residues 237–255 (TYIRPVYMNLAGFGVDGLT). A helical transmembrane segment spans residues 256–276 (LVLLSFGIASFIGTSLSSFIL). Topologically, residues 277 to 281 (KRSVK) are cytoplasmic. The chain crosses the membrane as a helical span at residues 282–302 (LALAGAPLILAVSALVLTLCG). At 303 to 305 (SDK) the chain is on the periplasmic side. A helical membrane pass occupies residues 306 to 326 (IVATGVAIIWGLTFALVPVGW). At 327–343 (STWSTRSLADQAEKAGS) the chain is on the cytoplasmic side. Residues 344 to 364 (IQVAVIQLANTCGAAIGGYAL) form a helical membrane-spanning segment. Residues 365 to 366 (DN) lie on the Periplasmic side of the membrane. A helical transmembrane segment spans residues 367-387 (IGLTSPLMLSGTLMLLTALLV). Topologically, residues 388-394 (TAKVKMK) are cytoplasmic.

This sequence belongs to the major facilitator superfamily. DHA1 family. NepI (TC 2.A.1.2.26) subfamily.

Its subcellular location is the cell inner membrane. It catalyses the reaction inosine(in) + H(+)(out) = inosine(out) + H(+)(in). It carries out the reaction guanosine(in) + H(+)(out) = guanosine(out) + H(+)(in). Its function is as follows. Involved in the efflux of purine ribonucleosides, such as inosine and guanosine. The protein is Purine ribonucleoside efflux pump NepI of Shigella dysenteriae serotype 1 (strain Sd197).